Here is a 356-residue protein sequence, read N- to C-terminus: S-adenosylmethionine:tRNA ribosyltransferase-isomerase (356 aa).

This sequence belongs to the QueA family. As to quaternary structure, monomer.

The protein resides in the cytoplasm. It carries out the reaction 7-aminomethyl-7-carbaguanosine(34) in tRNA + S-adenosyl-L-methionine = epoxyqueuosine(34) in tRNA + adenine + L-methionine + 2 H(+). It participates in tRNA modification; tRNA-queuosine biosynthesis. Functionally, transfers and isomerizes the ribose moiety from AdoMet to the 7-aminomethyl group of 7-deazaguanine (preQ1-tRNA) to give epoxyqueuosine (oQ-tRNA). The chain is S-adenosylmethionine:tRNA ribosyltransferase-isomerase from Nitrosospira multiformis (strain ATCC 25196 / NCIMB 11849 / C 71).